A 136-amino-acid polypeptide reads, in one-letter code: Large ribosomal subunit protein uL16 (136 aa).

This sequence belongs to the universal ribosomal protein uL16 family. As to quaternary structure, part of the 50S ribosomal subunit.

Its function is as follows. Binds 23S rRNA and is also seen to make contacts with the A and possibly P site tRNAs. The chain is Large ribosomal subunit protein uL16 from Wigglesworthia glossinidia brevipalpis.